The chain runs to 617 residues: Type IV inositol polyphosphate 5-phosphatase 6 (617 aa).

Disordered stretches follow at residues 30 to 62 (EFQA…KNTK) and 241 to 330 (DFDP…VLYS). The span at 242–253 (FDPSFRGSSSSH) shows a compositional bias: low complexity. The span at 254 to 290 (RPSDYSRRPSDYSRRPSDYSRRPSDYSRRPSDSRPSD) shows a compositional bias: basic and acidic residues. The span at 291 to 311 (YSRPSDYYSRPSDYSRPSDFS) shows a compositional bias: low complexity. 2 catalytic regions span residues 458-473 (DRVI…IALS) and 538-553 (KRRT…WFGE).

Belongs to the inositol polyphosphate 5-phosphatase family. Broadly expressed in emerging organs. Mostly localized in procambium of growing organs. Restricted to vascular differentiating cells of young organs.

The catalysed reaction is a 1,2-diacyl-sn-glycero-3-phospho-(1D-myo-inositol-4,5-bisphosphate) + H2O = a 1,2-diacyl-sn-glycero-3-phospho-(1D-myo-inositol 4-phosphate) + phosphate. The enzyme catalyses a 1,2-diacyl-sn-glycero-3-phospho-(1D-myo-inositol-3,4,5-trisphosphate) + H2O = a 1,2-diacyl-sn-glycero-3-phospho-(1D-myo-inositol-3,4-bisphosphate) + phosphate. In terms of biological role, has phosphatase activity toward PtdIns(4,5)P2 and PtdIns(3,4,5)P3. Required for the patterning of procambium and during the differentiation of vascular tissues. Acts before the acquisition of preprocambial identity. Seems to be also involved in the abscisic acid (ABA) signaling pathway. Acts redundantly with CVL1 for maintaining vascular continuity. Regulates phosphoinositide-dependent VAN3 localization. This is Type IV inositol polyphosphate 5-phosphatase 6 from Arabidopsis thaliana (Mouse-ear cress).